The primary structure comprises 176 residues: Small ribosomal subunit protein uS5 (176 aa).

The S5 DRBM domain occupies 15–78; it reads FEERIVEIRR…SAARRNVFEV (64 aa).

It belongs to the universal ribosomal protein uS5 family. In terms of assembly, part of the 30S ribosomal subunit. Contacts proteins S4 and S8.

In terms of biological role, with S4 and S12 plays an important role in translational accuracy. Located at the back of the 30S subunit body where it stabilizes the conformation of the head with respect to the body. The chain is Small ribosomal subunit protein uS5 from Thermosipho africanus (strain TCF52B).